Consider the following 150-residue polypeptide: Large ribosomal subunit protein uL23 (150 aa).

Residues 1-24 (MNKENKTQAVNKAKNTAKVAKKGS) form a disordered region. Positions 7-18 (TQAVNKAKNTAK) are enriched in low complexity.

The protein belongs to the universal ribosomal protein uL23 family.

In Tetrahymena thermophila (strain SB210), this protein is Large ribosomal subunit protein uL23 (RPL23A).